The chain runs to 216 residues: MNAPRFAAPARRTKKLPPLRVGIGGPVGSGKTTLLEMLCKGMRERYDLVAITNDIYTKEDQRLLTIAGALPEARIMGVETGGCPHTAIREDASINLEAVERMLARFPDADIVFIESGGDNLAATFSPELSDLTIYVIDVAGGEKIPRKGGPGITKSDLLVINKTDLAPLVGANLEVMASDTRKMRGERPYVMCNLKALDGVADVIAFIENKGLLTV.

25-32 is a GTP binding site; that stretch reads GPVGSGKT.

This sequence belongs to the SIMIBI class G3E GTPase family. UreG subfamily. In terms of assembly, homodimer. UreD, UreF and UreG form a complex that acts as a GTP-hydrolysis-dependent molecular chaperone, activating the urease apoprotein by helping to assemble the nickel containing metallocenter of UreC. The UreE protein probably delivers the nickel.

Its subcellular location is the cytoplasm. Facilitates the functional incorporation of the urease nickel metallocenter. This process requires GTP hydrolysis, probably effectuated by UreG. The chain is Urease accessory protein UreG from Burkholderia mallei (strain NCTC 10247).